The chain runs to 305 residues: MAEASAAGADAGSAVAAHRFFCHFCKGEVNPKLPEYICPRCDSGFIEEVTDDSSFLGGGGSRTDNSTATHFAELWDHLDHTMFLQDFRPFLSSNPLDQDNRANERGHQTHTDFWGPSRPPRLPMTRRYRSRGSTRPDRSPAIEGIIQQIFAGFFANSAIPGSPHPFSWSGMLHSNPGDYAWGQTGLDAIVTQLLGQLENTGPPPADKEKITSLPTVTVTQEQVNTGLECPVCKEDYTVEEKVRQLPCNHFFHSSCIVPWLELHDTCPVCRKSLNGEDSTRQTQSSEASASNRFSNDSQLHDRWTF.

Alanine 2 is modified (N-acetylalanine). Residues asparagine 100–histidine 110 are compositionally biased toward basic and acidic residues. The segment at asparagine 100 to serine 139 is disordered. Serine 133 is subject to Phosphoserine. The RING-type zinc-finger motif lies at cysteine 229–arginine 270. Residues asparagine 274–phenylalanine 305 form a disordered region. Residues arginine 280–serine 297 are compositionally biased toward polar residues.

As to quaternary structure, interacts with RAB7A. Interacts with EGFR and FLT3. Interacts with BST2. Interacts with STX17. Interacts with YWHAE. Phosphorylated by AKT1, allowing association with the 14-3-3 chaperones that facilitates associating with TLRs. Post-translationally, deubiquitinated by USP9X; antogonizing its autoubiquitination and subsequent proteasomal degradation. In terms of processing, RING-type zinc finger-dependent and E2-dependent autoubiquitination.

The protein localises to the cytoplasm. It localises to the cytoplasmic vesicle. Its subcellular location is the phagosome. It is found in the nucleus. The protein resides in the endoplasmic reticulum. The protein localises to the golgi apparatus. It catalyses the reaction S-ubiquitinyl-[E2 ubiquitin-conjugating enzyme]-L-cysteine + [acceptor protein]-L-lysine = [E2 ubiquitin-conjugating enzyme]-L-cysteine + N(6)-ubiquitinyl-[acceptor protein]-L-lysine.. The protein operates within protein modification; protein ubiquitination. Functionally, E3 ubiquitin-protein ligase that catalyzes the 'Lys-48'- and/or 'Lys-63'-linked polyubiquitination of various substrates and thereby plays a role in a number of signaling pathways including autophagy, innate immunity, cell proliferation and cell death. Plays a role in the endosomal trafficking and degradation of membrane receptors including EGFR, FLT3, MET and CXCR4 through their polyubiquitination. Participates together with BST2 in antiviral immunity by facilitating the internalization of HIV-1 virions into intracellular vesicles leading to their lysosomal degradation. Also possesses an antiviral activity independently of BST2 by promoting retroviral GAG proteins ubiquitination, redistribution to endo-lysosomal compartments and, ultimately, lysosomal degradation. Catalyzes distinct types of ubiquitination on MAVS and STING1 at different phases of viral infection to promote innate antiviral response. Mediates the 'Lys-48'-linked ubiquitination of MAVS leading to its proteasomal degradation and ubiquitinates STING1 via 'Lys-63'-linked polyubiquitination, critical for its oligomerization and the subsequent recruitment of TBK1. Plays a positive role in the autophagosome-lysosome fusion by interacting with STX17 and enhancing its stability without affecting 'Lys-48'- or 'Lys-63'-linked polyubiquitination levels, which in turn promotes autophagosome maturation. Negatively regulates TLR-induced expression of proinflammatory cytokines by catalyzing 'Lys-11'-linked ubiquitination of RAB1A and RAB13 to inhibit post-ER trafficking of TLRs to the Golgi by RAB1A and subsequently from the Golgi apparatus to the cell surface by RAB13. The chain is E3 ubiquitin-protein ligase RNF115 from Mus musculus (Mouse).